Consider the following 614-residue polypeptide: V-type proton ATPase catalytic subunit A isoform 1 (614 aa).

247 to 254 (GAFGCGKT) provides a ligand contact to ATP.

It belongs to the ATPase alpha/beta chains family. In terms of assembly, V-ATPase is a heteromultimeric enzyme made up of two complexes: the ATP-hydrolytic V1 complex and the proton translocation V0 complex. The V1 complex consists of three catalytic AB heterodimers that form a heterohexamer, three peripheral stalks each consisting of EG heterodimers, one central rotor including subunits D and F, and the regulatory subunits C and H. The proton translocation complex V0 consists of the proton transport subunit a, a ring of proteolipid subunits c9c'', rotary subunit d, subunits e and f, and the accessory subunits VhaAC45 and ATP6AP2.

The catalysed reaction is ATP + H2O + 4 H(+)(in) = ADP + phosphate + 5 H(+)(out). ATP hydrolysis occurs at the interface between the nucleotide-binding domains of subunits A and B. ATP hydrolysis triggers a conformational change in the subunits D and F, which induces a shift of subunit d. The c-ring is subsequently rotated and results in a continuous proton translocation across the membrane. In terms of biological role, catalytic subunit of the V1 complex of vacuolar(H+)-ATPase (V-ATPase), a multisubunit enzyme composed of a peripheral complex (V1) that hydrolyzes ATP and a membrane integral complex (V0) that translocates protons. V-ATPase is responsible for acidifying and maintaining the pH of intracellular compartments and in some cell types, is targeted to the plasma membrane, where it is responsible for acidifying the extracellular environment. The sequence is that of V-type proton ATPase catalytic subunit A isoform 1 (Vha68-1) from Drosophila melanogaster (Fruit fly).